Here is a 375-residue protein sequence, read N- to C-terminus: Phosphoglucan phosphatase DSP4, amyloplastic (375 aa).

Residues 1-42 (MFCVQNLPRSSALPLQSFKSHQRRPPCSVNTLGVMSNVNLHR) constitute an amyloplast transit peptide. Residues 49–71 (ISGPTSSAETSDANVEEEKSETY) are disordered. A compositionally biased stretch (polar residues) spans 51-61 (GPTSSAETSDA). In terms of domain architecture, Tyrosine-protein phosphatase spans 92 to 249 (NYNFIRPDLI…AADILTGLRK (158 aa)). The active-site Phosphocysteine intermediate is the Cys193. 194–199 (TAGLGR) is a substrate binding site. Residues 254–330 (LTWKNPDCTT…NKDGHVNNFV (77 aa)) are polysaccharide binding.

Expressed in phloem parenchyma of 16-24 week old seedlings and 2 year old trees (at protein level). Expressed in leaves of 16-24 week old seedlings and 2 year old trees.

Its subcellular location is the plastid. It localises to the amyloplast. The protein localises to the nucleus. Functionally, starch granule-associated phosphoglucan phosphatase involved in the control of starch accumulation. Acts as a major regulator of the initial steps of starch degradation at the granule surface. Functions during the day by dephosphorylating the night-accumulated phospho-oligosaccharides. Can release phosphate from both the C6 and the C3 positions. This is Phosphoglucan phosphatase DSP4, amyloplastic from Castanea sativa (Sweet chestnut).